The primary structure comprises 394 residues: Elongation factor Tu 1 (394 aa).

Positions 10-204 (KPHVNVGTIG…FLDSYIPEPE (195 aa)) constitute a tr-type G domain. The interval 19–26 (GHVDHGKT) is G1. 19–26 (GHVDHGKT) serves as a coordination point for GTP. T26 provides a ligand contact to Mg(2+). Residues 60–64 (GITIN) form a G2 region. A G3 region spans residues 81–84 (DCPG). GTP contacts are provided by residues 81-85 (DCPGH) and 136-139 (NKCD). Positions 136-139 (NKCD) are G4. The G5 stretch occupies residues 174–176 (SAL).

The protein belongs to the TRAFAC class translation factor GTPase superfamily. Classic translation factor GTPase family. EF-Tu/EF-1A subfamily. In terms of assembly, monomer.

Its subcellular location is the cytoplasm. The enzyme catalyses GTP + H2O = GDP + phosphate + H(+). Functionally, GTP hydrolase that promotes the GTP-dependent binding of aminoacyl-tRNA to the A-site of ribosomes during protein biosynthesis. This Shigella sonnei (strain Ss046) protein is Elongation factor Tu 1.